The chain runs to 182 residues: Hypoxanthine/guanine phosphoribosyltransferase (182 aa).

Belongs to the purine/pyrimidine phosphoribosyltransferase family. Archaeal HPRT subfamily. Homodimer.

The protein localises to the cytoplasm. It carries out the reaction IMP + diphosphate = hypoxanthine + 5-phospho-alpha-D-ribose 1-diphosphate. It catalyses the reaction GMP + diphosphate = guanine + 5-phospho-alpha-D-ribose 1-diphosphate. It functions in the pathway purine metabolism; IMP biosynthesis via salvage pathway; IMP from hypoxanthine: step 1/1. Catalyzes a salvage reaction resulting in the formation of IMP that is energically less costly than de novo synthesis. This Methanosphaerula palustris (strain ATCC BAA-1556 / DSM 19958 / E1-9c) protein is Hypoxanthine/guanine phosphoribosyltransferase.